Here is a 230-residue protein sequence, read N- to C-terminus: Poxin (230 aa).

H43 (proton donor) is an active-site residue. The active-site Shared with catalytic histidine of dimeric partner is Y174. Catalysis depends on K178, which acts as the Proton acceptor; shared with catalytic histidine of dimeric partner.

The protein belongs to the poxin family. Homodimer.

The catalysed reaction is 2',3'-cGAMP + H2O = Gp(2'-5')Ap(3') + H(+). In terms of biological role, nuclease that cleaves host 2',3'-cGAMP. This is Poxin (P26) from Orgyia pseudotsugata multicapsid polyhedrosis virus (OpMNPV).